A 226-amino-acid polypeptide reads, in one-letter code: Ribose-5-phosphate isomerase A (226 aa).

Substrate is bound by residues 33–36 (TGST), 86–89 (DGAD), and 99–102 (KGGG). The active-site Proton acceptor is Glu108. Substrate is bound at residue Lys126.

This sequence belongs to the ribose 5-phosphate isomerase family. Homodimer.

It carries out the reaction aldehydo-D-ribose 5-phosphate = D-ribulose 5-phosphate. The protein operates within carbohydrate degradation; pentose phosphate pathway; D-ribose 5-phosphate from D-ribulose 5-phosphate (non-oxidative stage): step 1/1. Catalyzes the reversible conversion of ribose-5-phosphate to ribulose 5-phosphate. The polypeptide is Ribose-5-phosphate isomerase A (Bordetella parapertussis (strain 12822 / ATCC BAA-587 / NCTC 13253)).